Here is a 404-residue protein sequence, read N- to C-terminus: Cysteine desulfurase IscS (404 aa).

Residues 75-76, N155, Q183, and 203-205 each bind pyridoxal 5'-phosphate; these read AT and SGH. K206 bears the N6-(pyridoxal phosphate)lysine mark. T243 contributes to the pyridoxal 5'-phosphate binding site. C328 (cysteine persulfide intermediate) is an active-site residue. C328 lines the [2Fe-2S] cluster pocket.

The protein belongs to the class-V pyridoxal-phosphate-dependent aminotransferase family. NifS/IscS subfamily. Homodimer. Forms a heterotetramer with IscU, interacts with other sulfur acceptors. Pyridoxal 5'-phosphate serves as cofactor.

The protein resides in the cytoplasm. The enzyme catalyses (sulfur carrier)-H + L-cysteine = (sulfur carrier)-SH + L-alanine. Its pathway is cofactor biosynthesis; iron-sulfur cluster biosynthesis. In terms of biological role, master enzyme that delivers sulfur to a number of partners involved in Fe-S cluster assembly, tRNA modification or cofactor biosynthesis. Catalyzes the removal of elemental sulfur atoms from cysteine to produce alanine. Functions as a sulfur delivery protein for Fe-S cluster synthesis onto IscU, an Fe-S scaffold assembly protein, as well as other S acceptor proteins. The protein is Cysteine desulfurase IscS of Shewanella baltica (strain OS185).